Reading from the N-terminus, the 210-residue chain is Protein PF1979 (210 aa).

The region spanning 7-201 (EWGEFLVRLA…EEYPRGPVKR (195 aa)) is the AMMECR1 domain.

This is Protein PF1979 from Pyrococcus furiosus (strain ATCC 43587 / DSM 3638 / JCM 8422 / Vc1).